The following is a 1127-amino-acid chain: Structural protein MDM1 (1127 aa).

The PXA domain occupies 85–273 (NAQIGKELES…WNLRIVSLSQ (189 aa)). Serine 670, serine 673, and serine 692 each carry phosphoserine. Residues 705-762 (SNNFRDNIASLTISIDQIEKELELLRHLILKADLTNNQMQLKILKKSQRTLLKELEMK) adopt a coiled-coil conformation. The PX domain occupies 782 to 905 (TKIYIRSYFS…RFLTDPTPFK (124 aa)).

The protein belongs to the sorting nexin family.

It is found in the cytoplasm. In terms of biological role, essential for mitotic growth. Mediates organelle inheritance. This Saccharomyces cerevisiae (strain ATCC 204508 / S288c) (Baker's yeast) protein is Structural protein MDM1 (MDM1).